Consider the following 287-residue polypeptide: Co-chaperone protein DjlA (287 aa).

The Periplasmic portion of the chain corresponds to methionine 1–lysine 6. The chain crosses the membrane as a helical span at residues phenylalanine 7–histidine 30. At leucine 31 to lysine 287 the chain is on the cytoplasmic side. In terms of domain architecture, J spans aspartate 221 to lysine 287.

As to quaternary structure, homodimer.

The protein resides in the cell inner membrane. Regulatory DnaK co-chaperone. Direct interaction between DnaK and DjlA is needed for the induction of the wcaABCDE operon, involved in the synthesis of a colanic acid polysaccharide capsule, possibly through activation of the RcsB/RcsC phosphotransfer signaling pathway. The colanic acid capsule may help the bacterium survive conditions outside the host. The chain is Co-chaperone protein DjlA from Pasteurella multocida (strain Pm70).